A 581-amino-acid chain; its full sequence is Proline--tRNA ligase (581 aa).

This sequence belongs to the class-II aminoacyl-tRNA synthetase family. ProS type 1 subfamily. As to quaternary structure, homodimer.

It is found in the cytoplasm. The catalysed reaction is tRNA(Pro) + L-proline + ATP = L-prolyl-tRNA(Pro) + AMP + diphosphate. Its function is as follows. Catalyzes the attachment of proline to tRNA(Pro) in a two-step reaction: proline is first activated by ATP to form Pro-AMP and then transferred to the acceptor end of tRNA(Pro). As ProRS can inadvertently accommodate and process non-cognate amino acids such as alanine and cysteine, to avoid such errors it has two additional distinct editing activities against alanine. One activity is designated as 'pretransfer' editing and involves the tRNA(Pro)-independent hydrolysis of activated Ala-AMP. The other activity is designated 'posttransfer' editing and involves deacylation of mischarged Ala-tRNA(Pro). The misacylated Cys-tRNA(Pro) is not edited by ProRS. This is Proline--tRNA ligase from Variovorax paradoxus (strain S110).